The following is a 458-amino-acid chain: MSITKEFDTITAISTPLGEGAIGIVRLSGTDALAIAQSVFKGKNLEQVASHTINYGHIIDPKTGTIIDEVMVSVMLAPKTFTRENVVEINTHGGIAVTNEILQLLIRQGARMAEPGEFTKRAFLNGRVDLTQAEAVMDIIRAKTDKAMTIAVKQLDGSLSQLINDTRQEILNTLAQVEVNIDYPEYDDVEEMTTALLREKTQEFQSLLENLLRTAKRGKILREGLSTAIIGRPNVGKSSLLNNLLREDKAIVTDIAGTTRDVIEEYVNIKGVPLKLVDTAGIRETDDLVEQIGVERSKKALQEADLVLLVLNASEKLTDQDRALLNLSQDSNRIILLNKTDLEQKIELEQLPADLIPISVLTNQNINLIEDRINQLFFDNAGLVEQDATYLSNARHISLIEKAVQSLEAVNDGLALGMPVDLLQVDLTRTWEILGEITGDAAPDELITQLFSQFCLGK.

Positions 26, 88, and 127 each coordinate (6S)-5-formyl-5,6,7,8-tetrahydrofolate. The 155-residue stretch at 224 to 378 (GLSTAIIGRP…IEDRINQLFF (155 aa)) folds into the TrmE-type G domain. Position 234 (Asn234) interacts with K(+). GTP contacts are provided by residues 234-239 (NVGKSS), 253-259 (TDIAGTT), and 278-281 (DTAG). Ser238 lines the Mg(2+) pocket. Residues Thr253, Ile255, and Thr258 each coordinate K(+). Thr259 is a binding site for Mg(2+). Lys458 contributes to the (6S)-5-formyl-5,6,7,8-tetrahydrofolate binding site.

The protein belongs to the TRAFAC class TrmE-Era-EngA-EngB-Septin-like GTPase superfamily. TrmE GTPase family. As to quaternary structure, homodimer. Heterotetramer of two MnmE and two MnmG subunits. The cofactor is K(+).

The protein localises to the cytoplasm. Exhibits a very high intrinsic GTPase hydrolysis rate. Involved in the addition of a carboxymethylaminomethyl (cmnm) group at the wobble position (U34) of certain tRNAs, forming tRNA-cmnm(5)s(2)U34. In Streptococcus pyogenes serotype M12 (strain MGAS9429), this protein is tRNA modification GTPase MnmE.